The sequence spans 644 residues: Exoribonuclease 2 (644 aa).

The RNB domain maps to 189 to 516 (RQDLTALNFV…NHRLLKAVIK (328 aa)). The S1 motif domain occupies 561–643 (NTRFAAEIID…ETRSIIARPA (83 aa)).

Belongs to the RNR ribonuclease family. RNase II subfamily.

The protein resides in the cytoplasm. It catalyses the reaction Exonucleolytic cleavage in the 3'- to 5'-direction to yield nucleoside 5'-phosphates.. Functionally, involved in mRNA degradation. Hydrolyzes single-stranded polyribonucleotides processively in the 3' to 5' direction. The chain is Exoribonuclease 2 from Salmonella gallinarum (strain 287/91 / NCTC 13346).